The sequence spans 469 residues: 23S rRNA (uracil(1939)-C(5))-methyltransferase RlmD (469 aa).

The 59-residue stretch at 11–69 (PKTSNQRLTVTVDKLDMNGVGVARWQNKPIFIAGVLPDEIVDVKVIEQKSKYARAKLIS) folds into the TRAM domain. Residues Cys-82, Cys-88, Cys-91, and Cys-178 each coordinate [4Fe-4S] cluster. S-adenosyl-L-methionine is bound by residues Gln-300, Phe-329, Asn-334, Glu-350, Asp-377, and Asp-399. Cys-425 (nucleophile) is an active-site residue.

It belongs to the class I-like SAM-binding methyltransferase superfamily. RNA M5U methyltransferase family. RlmD subfamily.

It carries out the reaction uridine(1939) in 23S rRNA + S-adenosyl-L-methionine = 5-methyluridine(1939) in 23S rRNA + S-adenosyl-L-homocysteine + H(+). In terms of biological role, catalyzes the formation of 5-methyl-uridine at position 1939 (m5U1939) in 23S rRNA. The sequence is that of 23S rRNA (uracil(1939)-C(5))-methyltransferase RlmD from Colwellia psychrerythraea (strain 34H / ATCC BAA-681) (Vibrio psychroerythus).